The sequence spans 136 residues: Small ribosomal subunit protein uS8 (136 aa).

Belongs to the universal ribosomal protein uS8 family. In terms of assembly, part of the 30S ribosomal subunit. Contacts proteins S5 and S12.

Its function is as follows. One of the primary rRNA binding proteins, it binds directly to 16S rRNA central domain where it helps coordinate assembly of the platform of the 30S subunit. This Synechococcus sp. (strain JA-2-3B'a(2-13)) (Cyanobacteria bacterium Yellowstone B-Prime) protein is Small ribosomal subunit protein uS8.